Here is a 146-residue protein sequence, read N- to C-terminus: Histone H2A.1 (146 aa).

Residues 118-146 form a disordered region; sequence SPAAAEKEAKSPKKKTSTKSPKKKVAAKE. 2 consecutive short sequence motifs (SPKK motif) follow at residues 128–131 and 137–140; these read SPKK. A compositionally biased stretch (basic residues) spans 129-146; the sequence is PKKKTSTKSPKKKVAAKE.

Belongs to the histone H2A family. The nucleosome is a histone octamer containing two molecules each of H2A, H2B, H3 and H4 assembled in one H3-H4 heterotetramer and two H2A-H2B heterodimers. The octamer wraps approximately 147 bp of DNA. In terms of processing, phosphorylated within its C-terminal part, probably at the SPKK motifs. As to expression, expressed preferentially in meristematic tissues of young seedlings, in stigma and ovary but not in pollen.

It is found in the nucleus. It localises to the chromosome. Core component of nucleosome. Nucleosomes wrap and compact DNA into chromatin, limiting DNA accessibility to the cellular machineries which require DNA as a template. Histones thereby play a central role in transcription regulation, DNA repair, DNA replication and chromosomal stability. DNA accessibility is regulated via a complex set of post-translational modifications of histones, also called histone code, and nucleosome remodeling. The sequence is that of Histone H2A.1 (H2A-9) from Triticum aestivum (Wheat).